The primary structure comprises 341 residues: Phosphate acyltransferase (341 aa).

The protein belongs to the PlsX family. Homodimer. Probably interacts with PlsY.

It localises to the cytoplasm. It catalyses the reaction a fatty acyl-[ACP] + phosphate = an acyl phosphate + holo-[ACP]. It functions in the pathway lipid metabolism; phospholipid metabolism. Its function is as follows. Catalyzes the reversible formation of acyl-phosphate (acyl-PO(4)) from acyl-[acyl-carrier-protein] (acyl-ACP). This enzyme utilizes acyl-ACP as fatty acyl donor, but not acyl-CoA. The chain is Phosphate acyltransferase from Idiomarina loihiensis (strain ATCC BAA-735 / DSM 15497 / L2-TR).